The chain runs to 483 residues: MGLFDFSVKELHDKLVKKEISPFDLVSESFNRIESVEDKVGSFITLNKEAAFGVAEELGDAGIDPNNMLAGLPIGIKDNIVTKSLRTTAASKILENFDPIYDATVVSKLKNAQTINIGKLNMDEFAMGSSTETSYFHKTHNPWDLSRVPGGSSGGSASAVAAGEVLFSLGSDTGGSIRQPAAFCGVVGMKPTYGRVSRFGLIAFASSLDQIGPITKNVEDNAYLLEAISGLDANDSTSINQPVERFSDSLTGDIKGLRIGVPKEYLGEGVDPGVKQAVLDALKTLEKLGATWDEVSLPHSEYGVASYYILASSEASSNLSRFDGVRYGYRSPNATTLEELYTKTRSEGFGDEVKRRIMLGTYALSSGYYDAYYKKAQQARTLIKQDFVNVFENYDVIIGPSSPTTAFKIDGMINDPITMYSNDILTVPINLAGVPAISVPCGFSDGLPVGLQIIGNYFEESLLYKVAHAFEQETTFHKEKPNL.

Active-site charge relay system residues include Lys77 and Ser152. Ser176 (acyl-ester intermediate) is an active-site residue.

This sequence belongs to the amidase family. GatA subfamily. In terms of assembly, heterotrimer of A, B and C subunits.

The enzyme catalyses L-glutamyl-tRNA(Gln) + L-glutamine + ATP + H2O = L-glutaminyl-tRNA(Gln) + L-glutamate + ADP + phosphate + H(+). Its function is as follows. Allows the formation of correctly charged Gln-tRNA(Gln) through the transamidation of misacylated Glu-tRNA(Gln) in organisms which lack glutaminyl-tRNA synthetase. The reaction takes place in the presence of glutamine and ATP through an activated gamma-phospho-Glu-tRNA(Gln). The protein is Glutamyl-tRNA(Gln) amidotransferase subunit A of Listeria monocytogenes serotype 4a (strain HCC23).